The following is a 215-amino-acid chain: Protein Ac34 (215 aa).

As to quaternary structure, interacts with host proteins P40, P34 ands P20.

It localises to the host nucleus. Functionally, plays a role in the translocation of the P40 subunit of host Arp2/3 to the nucleus. The robust nuclear accumulation of Arp2/3 induces nuclear actin polymerization to assist in virus replication. Mechanistically, subverts the host CRM1-dependent nuclear export pathway leading to Arp2/3 acumulation in the host nucleus. This chain is Protein Ac34 (Ac34), found in Autographa californica nuclear polyhedrosis virus (AcMNPV).